Here is a 370-residue protein sequence, read N- to C-terminus: Probable endopolygalacturonase A (370 aa).

Residues 1–19 (MPSAKPLFCLATLAGAALA) form the signal peptide. Positions 20–32 (APAPSRATDFNKR) are excised as a propeptide. Cys-35 and Cys-50 are disulfide-bonded. 6 PbH1 repeats span residues 162-192 (SDNLVIEDVTIDNSDGDSEGGHNTDGFDISE), 193-214 (STYITITGATVKNQDDCVAINS), 215-235 (GENIYFSGGTCSGGHGLSIGS), 244-265 (VKNVTFIDSTVSDSENGVRIKT), 273-295 (VEDITYSNIQLSGISDYGIVIEQ), and 307-352 (SNGV…DITG). Asp-207 serves as the catalytic Proton donor. Cys-209 and Cys-225 are disulfide-bonded. Residue His-229 is part of the active site. N-linked (GlcNAc...) asparagine glycosylation occurs at Asn-246. 2 cysteine pairs are disulfide-bonded: Cys-335/Cys-340 and Cys-359/Cys-368.

It belongs to the glycosyl hydrolase 28 family.

The protein localises to the secreted. The catalysed reaction is (1,4-alpha-D-galacturonosyl)n+m + H2O = (1,4-alpha-D-galacturonosyl)n + (1,4-alpha-D-galacturonosyl)m.. In terms of biological role, involved in maceration and soft-rotting of plant tissue. Hydrolyzes the 1,4-alpha glycosidic bonds of de-esterified pectate in the smooth region of the plant cell wall. This is Probable endopolygalacturonase A (pgaA) from Aspergillus kawachii (strain NBRC 4308) (White koji mold).